A 596-amino-acid chain; its full sequence is NADH-quinone oxidoreductase subunit C/D (596 aa).

Residues 1–186 (MMNDNKYIHI…PAFTLTRKKE (186 aa)) are NADH dehydrogenase I subunit C. The tract at residues 210-596 (DFMFLNLGPN…IDFVMSDVDR (387 aa)) is NADH dehydrogenase I subunit D.

It in the N-terminal section; belongs to the complex I 30 kDa subunit family. This sequence in the C-terminal section; belongs to the complex I 49 kDa subunit family. As to quaternary structure, NDH-1 is composed of 13 different subunits. Subunits NuoB, CD, E, F, and G constitute the peripheral sector of the complex.

The protein resides in the cell inner membrane. The enzyme catalyses a quinone + NADH + 5 H(+)(in) = a quinol + NAD(+) + 4 H(+)(out). NDH-1 shuttles electrons from NADH, via FMN and iron-sulfur (Fe-S) centers, to quinones in the respiratory chain. The immediate electron acceptor for the enzyme in this species is believed to be ubiquinone. Couples the redox reaction to proton translocation (for every two electrons transferred, four hydrogen ions are translocated across the cytoplasmic membrane), and thus conserves the redox energy in a proton gradient. The polypeptide is NADH-quinone oxidoreductase subunit C/D (Blochmanniella floridana).